The primary structure comprises 1675 residues: Coadhesin (1675 aa).

Residues 1–1356 (QGNYYSYGGT…TIADQADAAK (1356 aa)) are Extracellular-facing. The F5/8 type C 1 domain maps to 11-160 (TPGTPIGCTN…ICMRVGVESC (150 aa)). TSP type-1 domains are found at residues 168–220 (NGAW…NDCV), 224–279 (NGGW…QFCP), 281–336 (DGGW…QCCP), 338–393 (HGGW…QTCP), 403–458 (NGNY…IPCP), 460–515 (NGNW…TACP), and 517–572 (DGGW…GPCP). 21 disulfides stabilise this stretch: Cys180–Cys216, Cys184–Cys219, Cys194–Cys206, Cys236–Cys273, Cys240–Cys278, Cys251–Cys263, Cys293–Cys330, Cys297–Cys335, Cys308–Cys320, Cys350–Cys387, Cys354–Cys392, Cys365–Cys377, Cys415–Cys452, Cys419–Cys457, Cys430–Cys442, Cys472–Cys509, Cys476–Cys514, Cys487–Cys499, Cys528–Cys566, Cys532–Cys571, and Cys543–Cys555. The disordered stretch occupies residues 567 to 588 (NKGPCPTSPPTISPPTTGSPAD). 3 consecutive VWFA domains span residues 595–769 (DLVF…MDRI), 778–958 (DIGF…FKAL), and 966–1141 (DLTF…ISII). The TSP type-1 8 domain occupies 1144-1198 (PSGLSKWSSWSACSKTCRYLGKAGTQIRTRDCKIPELGCDGMRIDTVECNKMDCE). Disulfide bonds link Cys1156–Cys1192, Cys1160–Cys1197, and Cys1175–Cys1182. The region spanning 1192–1336 (CNKMDCEGCG…PCMQAAVFGC (145 aa)) is the F5/8 type C 2 domain. A helical membrane pass occupies residues 1357-1377 (GILIVLWILAGILTFLLLMAC). Residues 1378-1675 (CYYCCWHVCC…RGEEWYSRWG (298 aa)) lie on the Cytoplasmic side of the membrane. Residues 1463–1480 (EKHVTAEDVKSEKPKYSE) show a composition bias toward basic and acidic residues. Residues 1463–1491 (EKHVTAEDVKSEKPKYSEEASSGTIKSGS) are disordered. Residues 1481–1491 (EASSGTIKSGS) show a composition bias toward polar residues.

In terms of tissue distribution, component of the acid-insoluble and acid-soluble organic matrix of the aragonitic skeleton (at protein level).

It is found in the membrane. This chain is Coadhesin, found in Acropora millepora (Staghorn coral).